We begin with the raw amino-acid sequence, 435 residues long: Serine carboxypeptidase-like 14 (435 aa).

A signal peptide spans M1 to S23. 3 cysteine pairs are disulfide-bonded: C82–C325, C246–C260, and C284–C291. N103 carries N-linked (GlcNAc...) asparagine glycosylation. S178 is a catalytic residue. A glycan (N-linked (GlcNAc...) asparagine) is linked at N344. D360 is an active-site residue. N376 carries N-linked (GlcNAc...) asparagine glycosylation. H413 is an active-site residue.

This sequence belongs to the peptidase S10 family. As to expression, expressed in senescent leaves.

The protein resides in the secreted. Probable carboxypeptidase. This Arabidopsis thaliana (Mouse-ear cress) protein is Serine carboxypeptidase-like 14 (SCPL14).